The following is a 139-amino-acid chain: Ribonuclease homolog (139 aa).

Residues 1 to 23 form the signal peptide; it reads MAMSSLWWTAILLLALTVSMCYG. The active-site Proton acceptor is H34. 3 disulfide bridges follow: C49–C102, C64–C111, and C82–C126. 65 to 69 is a binding site for substrate; sequence KSFNT. Catalysis depends on H133, which acts as the Proton donor.

The protein belongs to the pancreatic ribonuclease family.

It localises to the secreted. This Gallus gallus (Chicken) protein is Ribonuclease homolog.